Here is a 161-residue protein sequence, read N- to C-terminus: Nucleotide-binding protein ABO_0048 (161 aa).

Belongs to the YajQ family.

Nucleotide-binding protein. The chain is Nucleotide-binding protein ABO_0048 from Alcanivorax borkumensis (strain ATCC 700651 / DSM 11573 / NCIMB 13689 / SK2).